Reading from the N-terminus, the 242-residue chain is Probable transcriptional regulatory protein lp_2253 (242 aa).

The interval 1–21 (MSGHSKWHNIQGRKNAQDAKR) is disordered.

Belongs to the TACO1 family.

The protein localises to the cytoplasm. The polypeptide is Probable transcriptional regulatory protein lp_2253 (Lactiplantibacillus plantarum (strain ATCC BAA-793 / NCIMB 8826 / WCFS1) (Lactobacillus plantarum)).